The chain runs to 130 residues: UPF0102 protein SCO5602 (130 aa).

Belongs to the UPF0102 family.

This chain is UPF0102 protein SCO5602, found in Streptomyces coelicolor (strain ATCC BAA-471 / A3(2) / M145).